The sequence spans 31 residues: Dermaseptin-DI3 (31 aa).

It belongs to the frog skin active peptide (FSAP) family. Dermaseptin subfamily. In terms of tissue distribution, expressed by the skin glands.

Its subcellular location is the secreted. Antibacterial activity against Gram-positive bacteria S.aureus and E.faecalis, and Gram-negative bacteria P.aeruginosa and E.coli. The chain is Dermaseptin-DI3 from Phyllomedusa distincta (Monkey frog).